The following is a 369-amino-acid chain: Probable dual-specificity RNA methyltransferase RlmN (369 aa).

Glutamate 108 (proton acceptor) is an active-site residue. Positions 114–351 (YPDRATLCIS…LAQGVSCTVR (238 aa)) constitute a Radical SAM core domain. Cysteine 121 and cysteine 362 are joined by a disulfide. 3 residues coordinate [4Fe-4S] cluster: cysteine 128, cysteine 132, and cysteine 135. Residues 183 to 184 (GE), serine 217, 240 to 242 (SLH), and asparagine 319 contribute to the S-adenosyl-L-methionine site. Cysteine 362 serves as the catalytic S-methylcysteine intermediate.

The protein belongs to the radical SAM superfamily. RlmN family. [4Fe-4S] cluster serves as cofactor.

It localises to the cytoplasm. It carries out the reaction adenosine(2503) in 23S rRNA + 2 reduced [2Fe-2S]-[ferredoxin] + 2 S-adenosyl-L-methionine = 2-methyladenosine(2503) in 23S rRNA + 5'-deoxyadenosine + L-methionine + 2 oxidized [2Fe-2S]-[ferredoxin] + S-adenosyl-L-homocysteine. It catalyses the reaction adenosine(37) in tRNA + 2 reduced [2Fe-2S]-[ferredoxin] + 2 S-adenosyl-L-methionine = 2-methyladenosine(37) in tRNA + 5'-deoxyadenosine + L-methionine + 2 oxidized [2Fe-2S]-[ferredoxin] + S-adenosyl-L-homocysteine. In terms of biological role, specifically methylates position 2 of adenine 2503 in 23S rRNA and position 2 of adenine 37 in tRNAs. The chain is Probable dual-specificity RNA methyltransferase RlmN from Rhodococcus jostii (strain RHA1).